Consider the following 456-residue polypeptide: MSEDEAAQAPGPSLSEQDQQSAVQRVAALPLIRATCTAVSEAYSAAKDRHPLLGSACRLAEHCVCDLTTRALDHAQPLLSHLQPQLATVNDLACRGLDKLEEKLPFLQQPSETVVTSAKGVVASSVTGMVGLARQGRRWSVELKRSVSHAMDVVLEKSEELVDHFLPMTEEELAALAAEAEGPEVGSVEEQRKHQGYFVRLGSLSTRLRHLAYEHSLGKLRQKKHHAQDTLAQLQETLELIHRMQCGVTPITPARPGKVHELWEDWSQRPLENGRRRHSQAELETLVLSRNLMRELQSTVDALETSVRGLPPSAQEKVAEVRRSVDALQAAFADARRFGDLPAAVLAEGRGSMARAHACVDELLELVVQAMPLPWLVGPFAPILVERPEPPPDLEALVDEVIGGPDPRWAHLDWPAQQRAWQAQHGEGTVLSGNIPEEEPEPPSRPKHTLMPELDF.

Residues 1 to 20 are disordered; sequence MSEDEAAQAPGPSLSEQDQQ. The segment at 1–108 is interaction with LIPE; it reads MSEDEAAQAP…KLEEKLPFLQ (108 aa). Residues 1–173 are essential for lipid droplet targeting; the sequence is MSEDEAAQAP…HFLPMTEEEL (173 aa). Phosphoserine is present on residues serine 2, serine 148, and serine 324. The interaction with PNPLA2 and ABHD5 stretch occupies residues 185-456; the sequence is VGSVEEQRKH…KHTLMPELDF (272 aa). The disordered stretch occupies residues 420-456; it reads AWQAQHGEGTVLSGNIPEEEPEPPSRPKHTLMPELDF. Residues 438 to 456 are recruits mitochondria at the lipid droplet surface; it reads EEPEPPSRPKHTLMPELDF.

The protein belongs to the perilipin family. As to quaternary structure, homooligomer. Interacts with PNPLA2; prevents interaction of PNPLA2 with ABHD5. Interacts with ABHD5; targets ABHD5 to lipid droplets and promotes interaction of ABHD5 with PNPLA2. Interacts with LIPE. Phosphorylated by PKA. Phosphorylated on serine in skeletal muscle at rest or upon lipolytic stimulation.

The protein resides in the lipid droplet. The protein localises to the cytoplasm. Its subcellular location is the mitochondrion. Functionally, lipid droplet-associated protein that maintains the balance between lipogenesis and lipolysis and also regulates fatty acid oxidation in oxidative tissues. Recruits mitochondria to the surface of lipid droplets and is involved in lipid droplet homeostasis by regulating both the storage of fatty acids in the form of triglycerides and the release of fatty acids for mitochondrial fatty acid oxidation. In lipid droplet triacylglycerol hydrolysis, plays a role as a scaffolding protein for three major key lipolytic players: ABHD5, PNPLA2 and LIPE. Reduces the triacylglycerol hydrolase activity of PNPLA2 by recruiting and sequestering PNPLA2 to lipid droplets. Phosphorylation by PKA enables lipolysis probably by promoting release of ABHD5 from the perilipin scaffold and by facilitating interaction of ABHD5 with PNPLA2. Also increases lipolysis through interaction with LIPE and upon PKA-mediated phosphorylation of LIPE. The chain is Perilipin-5 (Plin5) from Ovis aries (Sheep).